Consider the following 410-residue polypeptide: Argininosuccinate synthase (410 aa).

8–16 (AYSGGLDTS) contributes to the ATP binding site. Tyr-86 is a binding site for L-citrulline. Gly-116 lines the ATP pocket. Residues Thr-118, Asn-122, and Asp-123 each coordinate L-aspartate. Residue Asn-122 coordinates L-citrulline. L-citrulline-binding residues include Arg-126, Ser-174, Glu-259, and Tyr-271.

The protein belongs to the argininosuccinate synthase family. Type 1 subfamily. In terms of assembly, homotetramer.

Its subcellular location is the cytoplasm. It carries out the reaction L-citrulline + L-aspartate + ATP = 2-(N(omega)-L-arginino)succinate + AMP + diphosphate + H(+). The protein operates within amino-acid biosynthesis; L-arginine biosynthesis; L-arginine from L-ornithine and carbamoyl phosphate: step 2/3. In Leuconostoc citreum (strain KM20), this protein is Argininosuccinate synthase.